A 168-amino-acid chain; its full sequence is Gamma-glutamylaminecyclotransferase (168 aa).

A disordered region spans residues methionine 1 to aspartate 20. Residue tyrosine 32–leucine 35 coordinates substrate. Glutamate 107 serves as the catalytic Proton acceptor.

It belongs to the gamma-glutamylcyclotransferase family. In terms of assembly, monomer.

The enzyme catalyses epsilon-(gamma-L-glutamyl)-L-lysine = 5-oxo-L-proline + L-lysine. Contributes to degradation of proteins cross-linked by transglutaminases by degrading the cross-link between a lysine and a glutamic acid residue. Catalyzes the formation of 5-oxo-L-proline from L-gamma-glutamyl-L-epsilon-lysine. Inactive with L-gamma-glutamyl-alpha-amino acid substrates such as L-gamma-glutamyl-L-alpha-cysteine and L-gamma-glutamyl-L-alpha-alanine. The polypeptide is Gamma-glutamylaminecyclotransferase (GGACT) (Bos taurus (Bovine)).